The following is a 200-amino-acid chain: Large ribosomal subunit protein uL4 (200 aa).

The tract at residues 42–65 (TRAQKTRSEVSGGGAKPWRQKGTG) is disordered.

The protein belongs to the universal ribosomal protein uL4 family. As to quaternary structure, part of the 50S ribosomal subunit.

Functionally, one of the primary rRNA binding proteins, this protein initially binds near the 5'-end of the 23S rRNA. It is important during the early stages of 50S assembly. It makes multiple contacts with different domains of the 23S rRNA in the assembled 50S subunit and ribosome. Forms part of the polypeptide exit tunnel. The sequence is that of Large ribosomal subunit protein uL4 from Vibrio vulnificus (strain CMCP6).